Consider the following 910-residue polypeptide: Periodic tryptophan protein 2 homolog (910 aa).

WD repeat units follow at residues 12–50 (GTVY…SKTL), 53–92 (DCNY…KIYT), 94–134 (RSNK…KVYN), 144–183 (LSSD…NLFI), 188–227 (SHKG…GELV), 271–310 (GKSV…LVHN), 313–355 (VSEM…YVMK), 358–397 (AHSL…CTVT), 400–439 (EHTS…NFRT), 443–485 (PEPT…DILS), 486–523 (GHES…AETV), 525–563 (VSHE…NLGS), 586–625 (AKTK…ILKK), and 688–728 (RPEV…DPFQ). The tract at residues 867-910 (SKKSVKKEEEEEEDVSDESDDEDIEDESAGSDDEDSDDSVEIIE) is disordered. The span at 875 to 910 (EEEEEDVSDESDDEDIEDESAGSDDEDSDDSVEIIE) shows a compositional bias: acidic residues.

The protein belongs to the WD repeat PWP2 family.

In Caenorhabditis elegans, this protein is Periodic tryptophan protein 2 homolog.